The primary structure comprises 240 residues: Methylthioribulose-1-phosphate dehydratase (240 aa).

Residue cysteine 99 participates in substrate binding. Positions 116 and 118 each coordinate Zn(2+). Glutamate 145 serves as the catalytic Proton donor/acceptor. A Zn(2+)-binding site is contributed by histidine 201.

This sequence belongs to the aldolase class II family. MtnB subfamily. It depends on Zn(2+) as a cofactor.

The protein localises to the cytoplasm. The enzyme catalyses 5-(methylsulfanyl)-D-ribulose 1-phosphate = 5-methylsulfanyl-2,3-dioxopentyl phosphate + H2O. It functions in the pathway amino-acid biosynthesis; L-methionine biosynthesis via salvage pathway; L-methionine from S-methyl-5-thio-alpha-D-ribose 1-phosphate: step 2/6. Its function is as follows. Catalyzes the dehydration of methylthioribulose-1-phosphate (MTRu-1-P) into 2,3-diketo-5-methylthiopentyl-1-phosphate (DK-MTP-1-P). The polypeptide is Methylthioribulose-1-phosphate dehydratase (Paracoccidioides lutzii (strain ATCC MYA-826 / Pb01) (Paracoccidioides brasiliensis)).